Here is a 260-residue protein sequence, read N- to C-terminus: RNA polymerase sigma-G factor (260 aa).

The tract at residues 1 to 71 is recognizes anti-sigma-G factor Gin (csfB); it reads MSRNKVEICG…GEYVDDLFQV (71 aa). The Polymerase core binding motif lies at 67–80; it reads DLFQVGCIGLMKSI. Residues 229 to 248 constitute a DNA-binding region (H-T-H motif); that stretch reads QMEVAEEIGISQAQVSRLEK.

This sequence belongs to the sigma-70 factor family. As to quaternary structure, interacts with anti-sigma-G factor Gin (csfB).

Its activity is regulated as follows. Activity repressed by anti-sigma-G factor Gin (csfB) and Lon protease during the early stages of forespore development. When both Gin and sigma-G are expressed in E.coli Gin inhibits sigma-G activity, strongly suggesting Gin inhibits by direct physical interaction. Sigma factors are initiation factors that promote the attachment of RNA polymerase to specific initiation sites and are then released. This sigma factor is responsible for the expression of sporulation specific genes in the forespore. In Bacillus subtilis (strain 168), this protein is RNA polymerase sigma-G factor (sigG).